A 210-amino-acid chain; its full sequence is Ion-translocating oxidoreductase complex subunit G (210 aa).

Residues serine 9–leucine 29 traverse the membrane as a helical segment. Threonine 176 carries the post-translational modification FMN phosphoryl threonine.

The protein belongs to the RnfG family. The complex is composed of six subunits: RnfA, RnfB, RnfC, RnfD, RnfE and RnfG. The cofactor is FMN.

It is found in the cell inner membrane. Functionally, part of a membrane-bound complex that couples electron transfer with translocation of ions across the membrane. In Aliivibrio fischeri (strain ATCC 700601 / ES114) (Vibrio fischeri), this protein is Ion-translocating oxidoreductase complex subunit G.